The sequence spans 167 residues: Ubiquitin-fold modifier-conjugating enzyme 1 (167 aa).

Residue C116 is the Glycyl thioester intermediate of the active site. K122 participates in a covalent cross-link: Glycyl lysine isopeptide (Lys-Gly) (interchain with G-Cter in UFM1).

This sequence belongs to the ubiquitin-conjugating enzyme family. UFC1 subfamily. Interacts with UBA5 (via C-terminus). Interacts with UFL1. Interacts with UFM1. Interacts with KIRREL3. In terms of processing, ufmylated at Lys-122. Deufmylated by UFSP1.

Functionally, E2-like enzyme which specifically catalyzes the second step in ufmylation. Accepts the ubiquitin-like modifier UFM1 from the E1 enzyme UBA5 and forms an intermediate with UFM1 via a thioester linkage. Ufmylation is involved in various processes, such as ribosome recycling, response to DNA damage, interferon response or reticulophagy (also called ER-phagy). In Mus musculus (Mouse), this protein is Ubiquitin-fold modifier-conjugating enzyme 1.